A 250-amino-acid polypeptide reads, in one-letter code: 5-oxoprolinase subunit A (250 aa).

Belongs to the LamB/PxpA family. Forms a complex composed of PxpA, PxpB and PxpC.

It carries out the reaction 5-oxo-L-proline + ATP + 2 H2O = L-glutamate + ADP + phosphate + H(+). In terms of biological role, catalyzes the cleavage of 5-oxoproline to form L-glutamate coupled to the hydrolysis of ATP to ADP and inorganic phosphate. In Nocardia farcinica (strain IFM 10152), this protein is 5-oxoprolinase subunit A.